Reading from the N-terminus, the 608-residue chain is Ceramide kinase (608 aa).

The DAGKc domain maps to 160–367 (ERPRNLLVFV…LDAMQVVRWK (208 aa)). Residues 170–174 (HPKSG), Thr201, and 230–236 (GDGFFNE) each bind ATP. 229-232 (GGDG) is a substrate binding site. The active-site Proton donor/acceptor is the Asp231. A disordered region spans residues 254-280 (PSDSFNSVQSRGSSSVPEPGDEVHETD). The segment covering 255-269 (SDSFNSVQSRGSSSV) has biased composition (polar residues). Position 329 (Ser329) interacts with ATP.

Ca(2+) is required as a cofactor.

The catalysed reaction is an N-acylsphing-4-enine + ATP = an N-acylsphing-4-enine 1-phosphate + ADP + H(+). Functionally, catalyzes specifically the phosphorylation of ceramide to form ceramide 1-phosphate. Possesses high activity on ceramide analogs (C6, C8 synthetic ceramides) and lower activity on C6 and C8 dihydroceramides. Has weak activity on natural ceramides (a mixture of ceramides from bovine brain) and the synthetic substrate C2 ceramide. Has very poor activity on diacylglycerol and sphingosine. Ceramide is a critical sphingolipid metabolite that induces programmed cell death (PCD) in plants and ceramide-1-phosphate has a PCD suppressive effect. Thus, ceramide phosphorylation plays a role in the modulation of PCD and CERK activity is crucial for the maintenance of cell viability. This is Ceramide kinase (CERK) from Arabidopsis thaliana (Mouse-ear cress).